Here is a 454-residue protein sequence, read N- to C-terminus: Bifunctional protein GlmU (454 aa).

Positions 1-226 (MSLEIVILAA…AMEVQGVNDR (226 aa)) are pyrophosphorylase. Residues 8 to 11 (LAAG), lysine 22, glutamine 73, 78 to 79 (GT), 99 to 101 (YGD), glycine 136, glutamate 151, asparagine 166, and asparagine 224 contribute to the UDP-N-acetyl-alpha-D-glucosamine site. Residue aspartate 101 coordinates Mg(2+). Asparagine 224 serves as a coordination point for Mg(2+). Residues 227 to 247 (MQQAQLERHYQRLRAEELMRQ) are linker. An N-acetyltransferase region spans residues 248–454 (GVTLLDPQRL…NWKRPEKIRK (207 aa)). Positions 330 and 348 each coordinate UDP-N-acetyl-alpha-D-glucosamine. The Proton acceptor role is filled by histidine 360. Residues tyrosine 363 and asparagine 374 each contribute to the UDP-N-acetyl-alpha-D-glucosamine site. Acetyl-CoA-binding positions include alanine 377, 383–384 (NY), serine 402, alanine 420, and arginine 437.

It in the N-terminal section; belongs to the N-acetylglucosamine-1-phosphate uridyltransferase family. The protein in the C-terminal section; belongs to the transferase hexapeptide repeat family. Homotrimer. The cofactor is Mg(2+).

It localises to the cytoplasm. The enzyme catalyses alpha-D-glucosamine 1-phosphate + acetyl-CoA = N-acetyl-alpha-D-glucosamine 1-phosphate + CoA + H(+). It carries out the reaction N-acetyl-alpha-D-glucosamine 1-phosphate + UTP + H(+) = UDP-N-acetyl-alpha-D-glucosamine + diphosphate. It functions in the pathway nucleotide-sugar biosynthesis; UDP-N-acetyl-alpha-D-glucosamine biosynthesis; N-acetyl-alpha-D-glucosamine 1-phosphate from alpha-D-glucosamine 6-phosphate (route II): step 2/2. Its pathway is nucleotide-sugar biosynthesis; UDP-N-acetyl-alpha-D-glucosamine biosynthesis; UDP-N-acetyl-alpha-D-glucosamine from N-acetyl-alpha-D-glucosamine 1-phosphate: step 1/1. It participates in bacterial outer membrane biogenesis; LPS lipid A biosynthesis. Its function is as follows. Catalyzes the last two sequential reactions in the de novo biosynthetic pathway for UDP-N-acetylglucosamine (UDP-GlcNAc). The C-terminal domain catalyzes the transfer of acetyl group from acetyl coenzyme A to glucosamine-1-phosphate (GlcN-1-P) to produce N-acetylglucosamine-1-phosphate (GlcNAc-1-P), which is converted into UDP-GlcNAc by the transfer of uridine 5-monophosphate (from uridine 5-triphosphate), a reaction catalyzed by the N-terminal domain. The sequence is that of Bifunctional protein GlmU from Pseudomonas paraeruginosa (strain DSM 24068 / PA7) (Pseudomonas aeruginosa (strain PA7)).